A 406-amino-acid chain; its full sequence is MGVFQKGEDQKGESANMKPIPLLSSYDMGKFNLSHRVVLAPLTRSRSYDNLPQSHAMEYYSQRATKGGLLIAEATGVSSDAQGMSVIPHTPGIWTKEQVEAWKPIVDAVHAKGGIFFCQIWHVGRASDMEERPISSTDKPIEKTEENYFLGFSTPRSLTVEEIPDVIKHFTLAAKNALEAGFDGVEVHAANGFLLDQFMKDGVNARADEYGGGVAGRCRFALEVVDAVAAEAGAGRTGVRLSPYSRCLDCADSDPDALAAHMARELGSRGVLYCNVVEPEMVATPAEGGSGGETMRIPHRLRAVREAFAGTLMVGGGYDREEGNWAVAGGYADLVVYGRLFLANPDLPRRFRLGAPLNGYDRATFYTADPVAGYTDYPFLDDDGDDGLAASAASASSNKSGDQDGV.

FMN-binding positions include 41–43 (PLT), alanine 74, and glutamine 119. 188–191 (HAAN) is a binding site for substrate. FMN-binding positions include arginine 240, glycine 317, and 338-339 (GR).

Belongs to the NADH:flavin oxidoreductase/NADH oxidase family. The cofactor is FMN.

Putative oxophytodienoate reductase that may be involved in the biosynthesis or metabolism of oxylipin signaling molecules. The sequence is that of Putative 12-oxophytodienoate reductase 12 (OPR12) from Oryza sativa subsp. japonica (Rice).